Reading from the N-terminus, the 616-residue chain is Cytochrome c oxidase subunit 1 (616 aa).

Residues 28–48 form a helical membrane-spanning segment; that stretch reads HLYLISGGFFFLLGGLEALFI. His-72 contacts Fe(II)-heme a. The next 6 helical transmembrane spans lie at 75-95, 102-122, 158-178, 198-218, 243-263, and 275-295; these read TMIFLAAMPLVFAFMNAVVPL, VAFPFLNALGFWMFFFGGLFL, GLQISGFGTIMGAINFLVTII, FVTSALILFAFPPLTVGLIFM, LFWVFGHPEVYILVLPAFGIF, and LFGYSSMVFATVLIAFLGFMV. Residues His-249 and Tyr-253 each contribute to the Cu cation site. The 1'-histidyl-3'-tyrosine (His-Tyr) cross-link spans 249–253; it reads HPEVY. His-298 and His-299 together coordinate Cu cation. Helical transmembrane passes span 303–323, 349–369, 380–400, 420–440, 463–483, 553–573, and 577–597; these read VGMGPIANAIFAVATMTIAVP, AVAFIPSFVMGGVTGVMLASA, FVVAHFHYVIVGGVVFALLAG, ITFWLFFIGFHLTFFIQHFLG, ISTIGAFFIAAATVILLINIV, SSFLPFVIAFGLFVAAFGFTY, and AGWGLPVAILGLLITLGSMFL. Position 384 (His-384) interacts with Fe(II)-heme o. His-384 is a binding site for heme a3. His-386 is a binding site for Fe(II)-heme a.

Belongs to the heme-copper respiratory oxidase family. Requires Cu(2+) as cofactor. Heme serves as cofactor.

The protein resides in the cell membrane. The catalysed reaction is 4 Fe(II)-[cytochrome c] + O2 + 8 H(+)(in) = 4 Fe(III)-[cytochrome c] + 2 H2O + 4 H(+)(out). The protein operates within energy metabolism; oxidative phosphorylation. In terms of biological role, cytochrome c oxidase is the component of the respiratory chain that catalyzes the reduction of oxygen to water. Subunits 1-3 form the functional core of the enzyme complex. Co I is the catalytic subunit of the enzyme. Electrons originating in cytochrome c are transferred via the copper A center of subunit 2 and heme a of subunit 1 to the bimetallic center formed by heme a3 and copper B. This cytochrome c oxidase shows proton pump activity across the membrane in addition to the electron transfer. This is Cytochrome c oxidase subunit 1 (ctaD) from Bacillus sp. (strain PS3).